The following is a 347-amino-acid chain: UPF0283 membrane protein ECA1987 (347 aa).

The span at 1-11 (MNEPLKPRVTF) shows a compositional bias: basic and acidic residues. Positions 1-48 (MNEPLKPRVTFDDVSPQEPQPQLRAGLAFDEQSSTPFSPISREEEVPE) are disordered. Transmembrane regions (helical) follow at residues 70–90 (MVMA…VQSL), 99–119 (WIAL…VGSL), and 213–233 (ESTL…FIAW).

The protein belongs to the UPF0283 family.

It localises to the cell inner membrane. The protein is UPF0283 membrane protein ECA1987 of Pectobacterium atrosepticum (strain SCRI 1043 / ATCC BAA-672) (Erwinia carotovora subsp. atroseptica).